An 87-amino-acid polypeptide reads, in one-letter code: Phosphoribosyl-ATP pyrophosphatase (87 aa).

Belongs to the PRA-PH family.

The protein resides in the cytoplasm. The catalysed reaction is 1-(5-phospho-beta-D-ribosyl)-ATP + H2O = 1-(5-phospho-beta-D-ribosyl)-5'-AMP + diphosphate + H(+). The protein operates within amino-acid biosynthesis; L-histidine biosynthesis; L-histidine from 5-phospho-alpha-D-ribose 1-diphosphate: step 2/9. This Bifidobacterium longum (strain DJO10A) protein is Phosphoribosyl-ATP pyrophosphatase.